Here is a 203-residue protein sequence, read N- to C-terminus: Pyridoxine/pyridoxamine 5'-phosphate oxidase (203 aa).

Residues 51-56, 66-67, R72, K73, and Q95 each bind FMN; these read RMVLLK and YT. K56 provides a ligand contact to substrate. Residues Y113, R117, and S121 each coordinate substrate. FMN is bound by residues 130–131 and W175; that span reads QS. 181-183 is a substrate binding site; sequence RLH. Position 185 (R185) interacts with FMN.

This sequence belongs to the pyridoxamine 5'-phosphate oxidase family. In terms of assembly, homodimer. Requires FMN as cofactor.

The catalysed reaction is pyridoxamine 5'-phosphate + O2 + H2O = pyridoxal 5'-phosphate + H2O2 + NH4(+). It catalyses the reaction pyridoxine 5'-phosphate + O2 = pyridoxal 5'-phosphate + H2O2. It functions in the pathway cofactor metabolism; pyridoxal 5'-phosphate salvage; pyridoxal 5'-phosphate from pyridoxamine 5'-phosphate: step 1/1. It participates in cofactor metabolism; pyridoxal 5'-phosphate salvage; pyridoxal 5'-phosphate from pyridoxine 5'-phosphate: step 1/1. Catalyzes the oxidation of either pyridoxine 5'-phosphate (PNP) or pyridoxamine 5'-phosphate (PMP) into pyridoxal 5'-phosphate (PLP). The protein is Pyridoxine/pyridoxamine 5'-phosphate oxidase of Novosphingobium aromaticivorans (strain ATCC 700278 / DSM 12444 / CCUG 56034 / CIP 105152 / NBRC 16084 / F199).